A 244-amino-acid polypeptide reads, in one-letter code: Ureidoacrylate amidohydrolase RutB (244 aa).

Residue aspartate 38 is the Proton acceptor of the active site. Lysine 147 is a catalytic residue. The Nucleophile role is filled by cysteine 180.

This sequence belongs to the isochorismatase family. RutB subfamily.

It carries out the reaction (Z)-3-ureidoacrylate + H2O + H(+) = (Z)-3-aminoacrylate + NH4(+) + CO2. The enzyme catalyses (Z)-3-ureidoacrylate + H2O = (Z)-3-aminoacrylate + carbamate + H(+). It catalyses the reaction (Z)-2-methylureidoacrylate + H2O + H(+) = (Z)-2-methylaminoacrylate + NH4(+) + CO2. Functionally, hydrolyzes ureidoacrylate to form aminoacrylate and carbamate. The carbamate hydrolyzes spontaneously, thereby releasing one of the nitrogen atoms of the pyrimidine ring as ammonia and one of its carbon atoms as CO2. This Escherichia coli O1:K1 / APEC protein is Ureidoacrylate amidohydrolase RutB.